The chain runs to 485 residues: MFQYEELNKQFIGGKWQEGSSPNVLENKNPYTQKTFTTFRKATADDVDEAYRAAALAKKKWDAVNPFEKRTILEKAVTYIEENEEAIIYLIMEELGGTRLKAAFEIGLVKNIIKEAATFPIRMEGKILPSTIDGKENRLYRVPAGVVGVISPFNFPFFLSMKSVAPALGAGNGVVLKPHEETPICGGTLIAKIFENAGIPAGLLNVVVTDIAEIGDSFVEHPVPRIISFTGSTKVGSYIGQLAMKHFKKPLLELGGNSAFIVLEDADIEYAVNAAVFSRFTHQGQICMSANRVLVHSSIYDKFLELYQAKVESLKVGDPMDPDTIIGPLINSRQTDGLMKTVEQAIEEGAVPVKLGGFNGTIVEPTILKDVKPFMSIAKEELFGPVVSFMKFDSEDEAVDIANETPFGLSGAVHTSNLERGVAFAKRIETGMIHVNDTTINDEPNVAFGGEKQSGLGRLNGEWSLEEFTTLKWISVQHEKRSFPY.

231–236 (GSTKVG) lines the NAD(+) pocket. Active-site residues include Glu253 and Cys287.

Belongs to the aldehyde dehydrogenase family.

It carries out the reaction benzaldehyde + NAD(+) + H2O = benzoate + NADH + 2 H(+). It catalyses the reaction vanillin + NAD(+) + H2O = vanillate + NADH + 2 H(+). Its function is as follows. A benzaldehyde dehydrogenase able to act on substrates with 3- and 4-hydroxy and methoxy substitutions; converts vanillin (4-hydroxy-3-methoxybenzaldehyde) to vanillic acid in vitro. The physiological substrate is unknown. The protein is Benzaldehyde dehydrogenase YfmT (yfmT) of Bacillus subtilis (strain 168).